The chain runs to 342 residues: Farnesyl pyrophosphate synthase 2 (342 aa).

K48, R51, and Q86 together coordinate isopentenyl diphosphate. The Mg(2+) site is built by D93 and D97. A dimethylallyl diphosphate-binding site is contributed by R102. R103 provides a ligand contact to isopentenyl diphosphate. Dimethylallyl diphosphate contacts are provided by K190, T191, Q229, K246, and K255.

Belongs to the FPP/GGPP synthase family. Mg(2+) serves as cofactor.

The protein resides in the cytoplasm. It carries out the reaction isopentenyl diphosphate + dimethylallyl diphosphate = (2E)-geranyl diphosphate + diphosphate. The enzyme catalyses isopentenyl diphosphate + (2E)-geranyl diphosphate = (2E,6E)-farnesyl diphosphate + diphosphate. Its pathway is isoprenoid biosynthesis; farnesyl diphosphate biosynthesis; farnesyl diphosphate from geranyl diphosphate and isopentenyl diphosphate: step 1/1. It participates in isoprenoid biosynthesis; geranyl diphosphate biosynthesis; geranyl diphosphate from dimethylallyl diphosphate and isopentenyl diphosphate: step 1/1. Catalyzes the sequential condensation of isopentenyl pyrophosphate with the allylic pyrophosphates, dimethylallyl pyrophosphate, and then with the resultant geranylpyrophosphate to the ultimate product farnesyl pyrophosphate. This is Farnesyl pyrophosphate synthase 2 (FPS2) from Parthenium argentatum (Guayule rubber plant).